Reading from the N-terminus, the 857-residue chain is KH domain-containing protein HEN4 (857 aa).

The segment covering 1 to 15 has biased composition (basic and acidic residues); that stretch reads MERNSVKFHAEKRSG. The disordered stretch occupies residues 1-27; sequence MERNSVKFHAEKRSGAFDPGSGFGSSK. KH domains follow at residues 46-110, 149-217, 451-521, and 541-610; these read HAAF…KLGA, TVVC…LVSI, DVVF…IMLI, and SITA…IFHI. The disordered stretch occupies residues 644-755; it reads SDNPLSIGSH…RGLSDASGGL (112 aa). Composition is skewed to polar residues over residues 645-665 and 673-688; these read DNPLSIGSHQSVSNPATNSSS and SFLSGSHSSVNYSRSV. Basic and acidic residues predominate over residues 718–730; sequence FTMDHSDNSHHLT. Positions 746–755 are enriched in low complexity; sequence RGLSDASGGL. The KH 5 domain occupies 775-839; it reads NTTVEIRVPA…DQTQAAQNLL (65 aa).

Interacts with HUA1. Interacts with FLK and PEP.

The protein localises to the nucleus speckle. In terms of biological role, functions in floral reproductive organ identity in the third whorl and floral determinacy specification by specifically promoting the processing of AGAMOUS (AG) pre-mRNA. Functions in association with HUA1 and HUA2. The protein is KH domain-containing protein HEN4 of Arabidopsis thaliana (Mouse-ear cress).